Reading from the N-terminus, the 509-residue chain is ATP synthase subunit alpha (509 aa).

Residue Gly169–Thr176 participates in ATP binding.

The protein belongs to the ATPase alpha/beta chains family. F-type ATPases have 2 components, CF(1) - the catalytic core - and CF(0) - the membrane proton channel. CF(1) has five subunits: alpha(3), beta(3), gamma(1), delta(1), epsilon(1). CF(0) has four main subunits: a(1), b(1), b'(1) and c(9-12).

The protein localises to the cell inner membrane. It carries out the reaction ATP + H2O + 4 H(+)(in) = ADP + phosphate + 5 H(+)(out). Its function is as follows. Produces ATP from ADP in the presence of a proton gradient across the membrane. The alpha chain is a regulatory subunit. The sequence is that of ATP synthase subunit alpha from Bradyrhizobium sp. (strain ORS 278).